A 158-amino-acid chain; its full sequence is 6,7-dimethyl-8-ribityllumazine synthase 2 (158 aa).

5-amino-6-(D-ribitylamino)uracil-binding positions include Trp20, 54–56 (AYE), and 78–80 (FVI). The Proton donor role is filled by Arg86. Ser111 contacts 5-amino-6-(D-ribitylamino)uracil. Residue His125 participates in (2S)-2-hydroxy-3-oxobutyl phosphate binding.

It belongs to the DMRL synthase family. As to quaternary structure, homodecamer, arranged as a dimer of pentamers.

It localises to the cytoplasm. It catalyses the reaction (2S)-2-hydroxy-3-oxobutyl phosphate + 5-amino-6-(D-ribitylamino)uracil = 6,7-dimethyl-8-(1-D-ribityl)lumazine + phosphate + 2 H2O + H(+). It functions in the pathway cofactor biosynthesis; riboflavin biosynthesis; riboflavin from 2-hydroxy-3-oxobutyl phosphate and 5-amino-6-(D-ribitylamino)uracil: step 1/2. Functionally, catalyzes the formation of 6,7-dimethyl-8-ribityllumazine by condensation of 5-amino-6-(D-ribitylamino)uracil with 3,4-dihydroxy-2-butanone 4-phosphate. This is the penultimate step in the biosynthesis of riboflavin. The isozyme RibH2 but not RibH1 is essential for Brucella intracellular survival and replication inside macrophages or in mice. Displays low catalytic activity in comparison with the isozyme RibH1. Is a highly immunogenic protein. Activates dendritic cells (DCs) in vitro, increasing the levels of costimulatory molecules and the secretion of pro-inflammatory cytokines, and recruits DCs, B cells and CD8+ T cells in vivo, both effects in a TLR4-dependent manner. Induces the cross presentation of covalently attached peptides and generates a strong and long-lasting humoral immune response without adjuvants; TLR4 signaling is necessary for the induction of the cytotoxic response but not for antigen cross presentation. Elicits a TLR4-mediated protective response against B16 melanoma in mice, slowing tumor growth and prolonging mice survival. This chain is 6,7-dimethyl-8-ribityllumazine synthase 2, found in Brucella abortus (strain 2308).